We begin with the raw amino-acid sequence, 174 residues long: Repair DNA polymerase X (174 aa).

The segment at 42–51 is involved in ssDNA binding; it reads REEKMLNDVD. Residues Asp49 and Asp51 each coordinate Mg(2+). A disulfide bridge links Cys81 with Cys86. Residue Asp100 participates in Mg(2+) binding.

It belongs to the DNA polymerase type-X family. The cofactor is Mg(2+).

It localises to the virion. The enzyme catalyses DNA(n) + a 2'-deoxyribonucleoside 5'-triphosphate = DNA(n+1) + diphosphate. Its function is as follows. Error-prone polymerase lacking a proofreading 3'-5' exonuclease which catalyzes the gap-filling reaction during the DNA repair process. Specifically binds intermediates in the single-nucleotide base-excision repair process. Also catalyzes DNA polymerization with low nucleotide-insertion fidelity. Probably acts as a strategic DNA mutase, which gives rise to a rapid emergence of variants. Generates mismatched G-G pairs, in that case, the polymerase first binds the deoxynucleotide followed by mismatch formation. Together with the viral DNA ligase, fills the single nucleotide gaps generated by the AP endonuclease. Binds DNA with high affinity via the helix alphaE. The protein is Repair DNA polymerase X of Ornithodoros (relapsing fever ticks).